Consider the following 477-residue polypeptide: D(1B) dopamine receptor (477 aa).

The Extracellular portion of the chain corresponds to 1-39 (MLPPGSNGTAYPGQFALYQQLAQGNAVGGSAGAPPLGPS). The N-linked (GlcNAc...) asparagine glycan is linked to Asn-7. The chain crosses the membrane as a helical span at residues 40–66 (QVVTACLLTLLIIWTLLGNVLVCAAIV). The Cytoplasmic portion of the chain corresponds to 67–77 (RSRHLRANMTN). A helical transmembrane segment spans residues 78-104 (VFIVSLAVSDLFVALLVMPWKAVAEVA). Residues 105 to 114 (GYWPFGAFCD) lie on the Extracellular side of the membrane. Cys-113 and Cys-217 are disulfide-bonded. The helical transmembrane segment at 115–136 (VWVAFDIMCSTASILNLCVISV) threads the bilayer. Over 137-158 (DRYWAISRPFRYKRKMTQRMAL) the chain is Cytoplasmic. The chain crosses the membrane as a helical span at residues 159 to 180 (VMVGLAWTLSILISFIPVQLNW). At 181-223 (HRDQAASWGGLDLPNNLANWTPWEEDFWEPDVNAENCDSSLNR) the chain is on the extracellular side. N-linked (GlcNAc...) asparagine glycosylation is present at Asn-222. The chain crosses the membrane as a helical span at residues 224–246 (TYAISSSLISFYIPVAIMIVTYT). Topologically, residues 247–296 (RIYRIAQVQIRRISSLERAAEHAQSCRSSAACAPDTSLRASIKKETKVLK) are cytoplasmic. The helical transmembrane segment at 297 to 320 (TLSVIMGVFVCCWLPFFILNCMVP) threads the bilayer. Residues 321 to 340 (FCSGHPEGPPAGFPCVSETT) lie on the Extracellular side of the membrane. The helical transmembrane segment at 341–360 (FDVFVWFGWANSSLNPVIYA) threads the bilayer. The Cytoplasmic portion of the chain corresponds to 361–477 (FNADFQKVFA…ITPFTPNGFH (117 aa)). Residue Cys-375 is the site of S-palmitoyl cysteine attachment.

Belongs to the G-protein coupled receptor 1 family. In terms of tissue distribution, neuron-specific, localized primarily within limbic regions of the brain.

The protein resides in the cell membrane. Functionally, dopamine receptor whose activity is mediated by G proteins which activate adenylyl cyclase. This Homo sapiens (Human) protein is D(1B) dopamine receptor (DRD5).